Reading from the N-terminus, the 665-residue chain is MRHFKVKAMVQSLDISAITGQQTDAEPSKRSKPSALRRTLQALRQRLTKRNRPKPPDWFLEKFSNTTNTDKIGKGCPAMEDAALSSEIRGSSVLCNRLSVDPTLQSHYRWLAIVSLAVLYNIIFVVGRAVFWEINKSAPAFWYTLDYLCDFIYLLDTLVHMHEGFLDQGLLVRDAFRLRRHYFHTKGWYLDVLSMLPTDLAYIWWPPETCSSLYLPCPVIVRLNRLLRINRLWEWFDRTETATGYPNAFRICKVVLAILVLIHWNACMYFAISYEIGFSSDSWVYNLNGTRNNTLQRQYIYSFYWSTLTLTTIGETPTPENDVEYLFVVADFLAGVLIFATIVGNIGSMISNMNVARVEFQNRMDGVKQYMAFRRVGHELEARVIRWFAYTWSQSGALDEERVLAALPDKLKAEIAIQVHMDTLKQVRIFHDTEPGLLEALVLKLKLQVFSPGDYICRKGDVGKEMYIVKRGKLSVVGDDGITVLATLGAGSVFGEVSVLEIAGNRTGNRRTANVRSLGYSDLFCLAKRDLWETLSDYPEARSTLTQRGCQLLRKDGLLDEQIFADSQRVHDSIEGGIEKLELSVENLNMRLARLLAEYTASQAKIKQRLAKLEMNGGPGTWRLECEPQSRARSGRLYSLQPKRRPRSRPDATAKSSDAAKQNTL.

Over 1–110 (MRHFKVKAMV…DPTLQSHYRW (110 aa)) the chain is Cytoplasmic. Residues 111-131 (LAIVSLAVLYNIIFVVGRAVF) traverse the membrane as a helical segment. Topologically, residues 132-138 (WEINKSA) are extracellular. Residue Asn-135 is glycosylated (N-linked (GlcNAc...) asparagine). The chain crosses the membrane as a helical span at residues 139–159 (PAFWYTLDYLCDFIYLLDTLV). At 160–186 (HMHEGFLDQGLLVRDAFRLRRHYFHTK) the chain is on the cytoplasmic side. Residues 187–207 (GWYLDVLSMLPTDLAYIWWPP) traverse the membrane as a helical segment. Topologically, residues 208–253 (ETCSSLYLPCPVIVRLNRLLRINRLWEWFDRTETATGYPNAFRICK) are extracellular. A helical transmembrane segment spans residues 254 to 274 (VVLAILVLIHWNACMYFAISY). The Cytoplasmic portion of the chain corresponds to 275–325 (EIGFSSDSWVYNLNGTRNNTLQRQYIYSFYWSTLTLTTIGETPTPENDVEY). A helical membrane pass occupies residues 326–346 (LFVVADFLAGVLIFATIVGNI). At 347–481 (GSMISNMNVA…GKLSVVGDDG (135 aa)) the chain is on the extracellular side. 3',5'-cyclic GMP contacts are provided by residues 437 to 559 (LLEA…DGLL), Glu-496, and Arg-511. A helical membrane pass occupies residues 482 to 502 (ITVLATLGAGSVFGEVSVLEI). At 503-665 (AGNRTGNRRT…SSDAAKQNTL (163 aa)) the chain is on the cytoplasmic side. A disordered region spans residues 633–665 (RSGRLYSLQPKRRPRSRPDATAKSSDAAKQNTL). The span at 654 to 665 (AKSSDAAKQNTL) shows a compositional bias: polar residues.

This sequence belongs to the cyclic nucleotide-gated cation channel (TC 1.A.1.5) family. In terms of tissue distribution, expressed in antennae and the visual system.

The protein resides in the membrane. Functionally, approximately 50-fold more sensitive to cGMP than to cAMP. May be involved in transduction cascades of both invertebrate photoreceptors and olfactory sensillae. The chain is Cyclic nucleotide-gated cation channel subunit A (CngA) from Drosophila melanogaster (Fruit fly).